The sequence spans 75 residues: UPF0346 protein LJ_1103 (75 aa).

This sequence belongs to the UPF0346 family.

This Lactobacillus johnsonii (strain CNCM I-12250 / La1 / NCC 533) protein is UPF0346 protein LJ_1103.